The sequence spans 494 residues: E3 ubiquitin-protein ligase ari-1.1 (494 aa).

Residues 1–30 (MSSDDEINMDDSDSSQGEIDDGCMSDDDGI) are compositionally biased toward acidic residues. The tract at residues 1-52 (MSSDDEINMDDSDSSQGEIDDGCMSDDDGIVLESREQNSSDYKDNGEPDNEV) is disordered. Residues 33–52 (ESREQNSSDYKDNGEPDNEV) are compositionally biased toward basic and acidic residues. A TRIAD supradomain region spans residues 124-331 (GDAECDICCS…SSWYSCNRFD (208 aa)). Residues C128, C131, C142, H144, C147, C150, C169, C174, C214, C219, C235, C237, C242, C245, H250, C255, C282, and C285 each coordinate Zn(2+). The RING-type 1 zinc-finger motif lies at 128-174 (CDICCSLGELSGLSCNHRACTQCWKAYLTNKIANNAQSEIECMAPNC). The IBR-type zinc finger occupies 194 to 255 (ATYRKLIVAS…GHDWHEPVNC (62 aa)). The RING-type 2; atypical zinc finger occupies 282-313 (CPKCMITIEKDGGCNHMTCKNTACRFEFCWMC). C295 is an active-site residue. Positions 300, 305, 310, 313, 320, and 327 each coordinate Zn(2+). The tract at residues 346–494 (RANLQRYLFY…ADQELWVFNE (149 aa)) is ariadne domain.

This sequence belongs to the RBR family. Ariadne subfamily. Interacts with ubiquitin-conjugating enzyme E2 ubc-18.

Its subcellular location is the nucleus. The protein resides in the cytoplasm. It catalyses the reaction [E2 ubiquitin-conjugating enzyme]-S-ubiquitinyl-L-cysteine + [acceptor protein]-L-lysine = [E2 ubiquitin-conjugating enzyme]-L-cysteine + [acceptor protein]-N(6)-ubiquitinyl-L-lysine.. Autoinhibited by the ariadne domain, which masks the second RING-type zinc finger that contains the active site and inhibits the E3 activity. Its function is as follows. E3 ubiquitin-protein transferase, which catalyzes ubiquitination of target proteins together with ubiquitin-conjugating enzyme E2 ubc-18. Acts with ubc-18 to regulate pharyngeal development. This is E3 ubiquitin-protein ligase ari-1.1 from Caenorhabditis elegans.